We begin with the raw amino-acid sequence, 258 residues long: Proteasome subunit beta type-1 (258 aa).

This sequence belongs to the peptidase T1B family. The 26S proteasome consists of a 20S proteasome core and two 19S regulatory subunits. The 20S proteasome core is composed of 28 subunits that are arranged in four stacked rings, resulting in a barrel-shaped structure. The two end rings are each formed by seven alpha subunits, and the two central rings are each formed by seven beta subunits. The catalytic chamber with the active sites is on the inside of the barrel.

It localises to the cytoplasm. Its subcellular location is the nucleus. Functionally, non-catalytic component of the proteasome, a multicatalytic proteinase complex which is characterized by its ability to cleave peptides with Arg, Phe, Tyr, Leu, and Glu adjacent to the leaving group at neutral or slightly basic pH. The proteasome has an ATP-dependent proteolytic activity. This Caenorhabditis elegans protein is Proteasome subunit beta type-1 (pbs-6).